Here is a 770-residue protein sequence, read N- to C-terminus: Signal transducer and activator of transcription 3 (770 aa).

At alanine 2 the chain carries N-acetylalanine. Residues lysine 49 and lysine 87 each carry the N6-acetyllysine modification. The short motif at 150 to 162 (DVRKRVQDLEQKM) is the Essential for nuclear import element. Residues 580–670 (WNEGYIMGFI…DATNILVSPL (91 aa)) form the SH2 domain. Residues lysine 601, lysine 615, and lysine 631 each carry the allysine; alternate modification. Lysine 601, lysine 615, and lysine 631 each carry N6-acetyllysine; alternate. Tyrosine 640 is modified (phosphotyrosine; by TYK2). Lysine 685 carries the allysine; alternate modification. Lysine 685 bears the N6-acetyllysine; alternate mark. The residue at position 705 (tyrosine 705) is a Phosphotyrosine; by FER and PTK6. Position 707 is an N6-acetyllysine (lysine 707). Residue threonine 714 is modified to Phosphothreonine. The residue at position 727 (serine 727) is a Phosphoserine; by DYRK2, NLK, NEK6, IRAK1, RPS6KA5, ZIPK/DAPK3 and PKC/PRKCE.

The protein belongs to the transcription factor STAT family. In terms of assembly, forms a homodimer or a heterodimer with a related family member (at least STAT1). Component of a promoter-binding complex composed of STAT3, NFATC3 and NFATC4; complex formation is enhanced by calcineurin. Interacts with IL31RA, NCOA1, PELP1, SIPAR, SOCS7, STATIP1 and TMF1. Interacts with IL23R in presence of IL23. Interacts (via SH2 domain) with NLK. Interacts with ARL2BP; the interaction is enhanced by LIF and JAK1 expression. Interacts with KPNA4 and KPNA5; KPNA4 may be the primary mediator of nuclear import. Interacts with CAV2; the interaction is increased on insulin-induced tyrosine phosphorylation of CAV2 and leads to STAT3 activation. Interacts with ARL2BP; interaction is enhanced with ARL2. Interacts with NEK6. Binds to CDK9 when activated and nuclear. Interacts with BMX. Interacts with ZIPK/DAPK3. Interacts with PIAS3; the interaction occurs on stimulation by IL6, CNTF or OSM and inhibits the DNA binding activity of STAT3. In prostate cancer cells, interacts with PRKCE and promotes DNA binding activity of STAT3. Interacts with STMN3, antagonizing its microtubule-destabilizing activity. Interacts with the 'Lys-129' acetylated form of BIRC5/survivin. Interacts with FER. Interacts (via SH2 domain) with EIF2AK2/PKR (via the kinase catalytic domain). Interacts with FGFR4. Interacts with INPP5F; the interaction is independent of STAT3 Tyr-705 phosphorylation status. Interacts with OCIAD1 and OCIAD2. Interacts (unphosphorylated or phosphorylated at Ser-727) with PHB1. Interacts and may form heterodimers with NHLH1. Found in a complex with SLC39A6, SLC39A10 and with the 'Ser-727' phosphorylated form of STAT3 throughout mitosis. Interacts (when acetylated) with EP300 (via bromo domain); interaction takes place following STAT3 acetylation by EP300 and promotes enhanceosome assembly. Interacts (when acetylated) with BRD2 (via bromo domain); interaction promotes STAT3 recruitment to chromatin and T-helper Th17 cell differentiation. Interacts with FAM220A/SIPAR; the interaction occurs in both the nucleus and the cytoplasm, is enhanced by IL6 and promotes STAT3 dephosphorylation. Interacts in both unphosphorylated and phosphorylated forms with FAM220A but interacts preferentially in the phosphorylated form in the nucleus. Interacts with PTPN2; the interaction is promoted by FAM220A and leads to STAT3 dephosphorylation which negatively regulates STAT3 transcriptional activator activity. Post-translationally, activated through tyrosine phosphorylation by BMX. Tyrosine phosphorylated in response to IL6, IL11, CNTF, LIF, KITLG/SCF, CSF1, EGF, PDGF, IFN-alpha and OSM. Activated KIT promotes phosphorylation on tyrosine residues and subsequent translocation to the nucleus. Tyrosine phosphorylated in response to constitutively activated FGFR1, FGFR2, FGFR3 and FGFR4. Phosphorylated on serine upon DNA damage, probably by ATM or ATR. Serine phosphorylation is important for the formation of stable DNA-binding STAT3 homodimers and maximal transcriptional activity. ARL2BP may participate in keeping the phosphorylated state of STAT3 within the nucleus. Tyrosine phosphorylated upon stimulation with EGF. Upon LPS challenge, phosphorylated within the nucleus by IRAK1. Phosphorylated on Ser-727 by RPS6KA5. Dephosphorylation on tyrosine residues by PTPN2 negatively regulates IL6/interleukin-6 signaling. Phosphorylation at Tyr-705 by FER, isoform M2 of PKM (PKM2) or PTK6 leads to an increase of its transcriptional activity. Phosphorylation at Tyr-705 is increased in the presence of calcineurin. Phosphorylation at Tyr-640 by TYK2 negatively regulates transcriptional activity. Acetylated on lysine residues by EP300/p300, promoting its activation. Acetylation at Lys-49 and Lys-87 by EP300/p300 promotes its activation. Acetylation at Lys-87 by EP300/p300 promotes its association with BRD2 and recruitment to chromatin. Deacetylated at Lys-49 and Lys-87 by HDAC1. Acetylation at Lys-685 by EP300/p300 promotes its homodimerization and activation. Deacetylated at Lys-685 by HDAC3. Acetylated on lysine residues by CREBBP. Deacetylation by LOXL3 leads to disrupt STAT3 dimerization and inhibit STAT3 transcription activity. Oxidation of lysine residues to allysine on STAT3 preferentially takes place on lysine residues that are acetylated. In terms of processing, some lysine residues are oxidized to allysine by LOXL3, leading to disrupt STAT3 dimerization and inhibit STAT3 transcription activity. Oxidation of lysine residues to allysine on STAT3 preferentially takes place on lysine residues that are acetylated. Detected in lung, heart, oviduct, ovary, uterus and kidney (at protein level). Expressed in cardiomyocytes (at protein level). Detected in ovary, oviduct, and at lower levels in uterus and lung.

It is found in the cytoplasm. Its subcellular location is the nucleus. In terms of biological role, signal transducer and transcription activator that mediates cellular responses to interleukins, KITLG/SCF, LEP and other growth factors. Once activated, recruits coactivators, such as NCOA1 or MED1, to the promoter region of the target gene. May mediate cellular responses to activated FGFR1, FGFR2, FGFR3 and FGFR4. Upon activation of IL6ST/gp130 signaling by interleukin-6 (IL6), binds to the IL6-responsive elements identified in the promoters of various acute-phase protein genes. Activated by IL31 through IL31RA. Acts as a regulator of inflammatory response by regulating differentiation of naive CD4(+) T-cells into T-helper Th17 or regulatory T-cells (Treg): acetylation promotes its transcription activity and cell differentiation while deacetylation and oxidation of lysine residues by LOXL3 inhibits differentiation. Involved in cell cycle regulation by inducing the expression of key genes for the progression from G1 to S phase, such as CCND1. Mediates the effects of LEP on melanocortin production, body energy homeostasis and lactation. May play an apoptotic role by transctivating BIRC5 expression under LEP activation. Cytoplasmic STAT3 represses macroautophagy by inhibiting EIF2AK2/PKR activity. Plays a crucial role in basal beta cell functions, such as regulation of insulin secretion. Following JAK/STAT signaling activation and as part of a complex with NFATC3 and NFATC4, binds to the alpha-beta E4 promoter region of CRYAB and activates transcription in cardiomyocytes. Plays an important role in host defense in methicillin-resistant S.aureus lung infection by regulating the expression of the antimicrobial lectin REG3G. This Rattus norvegicus (Rat) protein is Signal transducer and activator of transcription 3 (Stat3).